Consider the following 286-residue polypeptide: Puff II/9-2 protein (286 aa).

The signal sequence occupies residues 1 to 19; the sequence is MKQFIVLTVVLLAIQELQG. The tract at residues 61 to 235 is helical; that stretch reads IDGLKKENNI…EKDLNTLRCE (175 aa). Residue Asn156 is glycosylated (N-linked (GlcNAc...) asparagine).

The sequence is that of Puff II/9-2 protein (II/9-2) from Bradysia coprophila (Dark-winged fungus gnat).